The primary structure comprises 482 residues: Membrane-bound lytic murein transglycosylase F (482 aa).

The first 18 residues, 1-18 (MKGLFLRIITALALLFWA), serve as a signal peptide directing secretion. The interval 19 to 267 (IDMVFPWQFL…NLKEKYLGHI (249 aa)) is non-LT domain. The LT domain stretch occupies residues 268–482 (SQFDYVDTRS…NLEEIKENKD (215 aa)). Residue glutamate 312 is part of the active site. Polar residues predominate over residues 457 to 470 (ENQTTNDNANNESA). Residues 457–482 (ENQTTNDNANNESAVKNLEEIKENKD) form a disordered region. Basic and acidic residues predominate over residues 473-482 (NLEEIKENKD).

It in the N-terminal section; belongs to the bacterial solute-binding protein 3 family. In the C-terminal section; belongs to the transglycosylase Slt family.

The protein localises to the cell outer membrane. The catalysed reaction is Exolytic cleavage of the (1-&gt;4)-beta-glycosidic linkage between N-acetylmuramic acid (MurNAc) and N-acetylglucosamine (GlcNAc) residues in peptidoglycan, from either the reducing or the non-reducing ends of the peptidoglycan chains, with concomitant formation of a 1,6-anhydrobond in the MurNAc residue.. In terms of biological role, murein-degrading enzyme that degrades murein glycan strands and insoluble, high-molecular weight murein sacculi, with the concomitant formation of a 1,6-anhydromuramoyl product. Lytic transglycosylases (LTs) play an integral role in the metabolism of the peptidoglycan (PG) sacculus. Their lytic action creates space within the PG sacculus to allow for its expansion as well as for the insertion of various structures such as secretion systems and flagella. The polypeptide is Membrane-bound lytic murein transglycosylase F (Haemophilus influenzae (strain 86-028NP)).